The chain runs to 1271 residues: SR-related and CTD-associated factor 8 (1271 aa).

The region spanning 1–139 (MEAVKTFNSE…PLLDMAAGIP (139 aa)) is the CID domain. Residue T6 is modified to Phosphothreonine. A Glycyl lysine isopeptide (Lys-Gly) (interchain with G-Cter in SUMO1) cross-link involves residue K18. Positions 270 to 283 (GEDSEHSEEPKKEI) are enriched in basic and acidic residues. 3 disordered regions span residues 270–289 (GEDSEHSEEPKKEIPASQLS), 322–354 (QQQPQKATPQDSQEGTFGSEHSASPSQGSSQQH), and 384–468 (EEVF…PPIR). S273 is subject to Phosphoserine. The segment covering 327-354 (KATPQDSQEGTFGSEHSASPSQGSSQQH) has biased composition (polar residues). Over residues 394-443 (VAVRSRSRTHSRSRSRSPRKRRSRSRSGSRKRKHRKRSRSRSRERKRKSS) the composition is skewed to basic residues. The span at 447-461 (SSERRAREREKERQK) shows a compositional bias: basic and acidic residues. The region spanning 477–551 (TTLWVGQVDK…KVIKIAWALN (75 aa)) is the RRM domain. Residue T615 is modified to Phosphothreonine. 2 positions are modified to phosphoserine: S617 and S779. Residues 899-918 (TQPPAGPQNLPPLSIPNQRM) form a disordered region. Residues 902 to 912 (PAGPQNLPPLS) show a composition bias toward pro residues. An asymmetric dimethylarginine mark is found at R917, R927, and R938. Pro residues-rich tracts occupy residues 945–956 (GIPPQRGIPPPS) and 963–972 (HPPPRGPFPP). The tract at residues 945-1064 (GIPPQRGIPP…DGRDHFGRPP (120 aa)) is disordered. 2 stretches are compositionally biased toward basic and acidic residues: residues 1011–1027 (EGDRDYRFPPIETRESI) and 1034–1064 (DVRDVVGRPIDPREGPGRPPLDGRDHFGRPP). R1073 is subject to Asymmetric dimethylarginine. Residues 1198-1271 (YFEGATSQRK…VVESTETEGT (74 aa)) form a disordered region. Over residues 1255–1271 (ADIESEPVVESTETEGT) the composition is skewed to acidic residues.

In terms of assembly, interacts with POLR2A; via C-terminal heptapeptide repeat domain (CTD) phosphorylated at 'Ser-2' and 'Ser-5'. Identified in a complex with CDC5L and other spliceosomal proteins.

Its subcellular location is the nucleus. It is found in the nucleus matrix. Functionally, anti-terminator protein required to prevent early mRNA termination during transcription. Together with SCAF4, acts by suppressing the use of early, alternative poly(A) sites, thereby preventing the accumulation of non-functional truncated proteins. Mechanistically, associates with the phosphorylated C-terminal heptapeptide repeat domain (CTD) of the largest RNA polymerase II subunit (POLR2A), and subsequently binds nascent RNA upstream of early polyadenylation sites to prevent premature mRNA transcript cleavage and polyadenylation. Independently of SCAF4, also acts as a positive regulator of transcript elongation. The protein is SR-related and CTD-associated factor 8 of Homo sapiens (Human).